A 918-amino-acid chain; its full sequence is Glutamate receptor ionotropic, kainate 1 (918 aa).

An N-terminal signal peptide occupies residues 1-30; the sequence is MELGTLLAQPGLWTRDTSWALLYFLCYILP. Over 31-576 the chain is Extracellular; that stretch reads QTAPQVLRIG…VFSFLNPLSP (546 aa). Residues asparagine 68, asparagine 74, asparagine 276, asparagine 379, asparagine 428, asparagine 439, and asparagine 446 are each glycosylated (N-linked (GlcNAc...) asparagine). Residues proline 531, threonine 533, and arginine 538 each contribute to the L-glutamate site. N-linked (GlcNAc...) asparagine glycosylation is present at asparagine 561. The chain crosses the membrane as a helical span at residues 577–597; it reads DIWMYVLLACLGVSCVLFVIA. Topologically, residues 598 to 653 are cytoplasmic; sequence RFTPYEWYNPHPCNPDSDVVENNFTLLNSFWFGVGALMQQGSELMPKALSTRIVGG. The chain crosses the membrane as a helical span at residues 654–674; it reads IWWFFTLIIISSYTANLAAFL. Residues 675 to 834 are Extracellular-facing; that stretch reads TVERMESPID…KEASALGVEN (160 aa). L-glutamate is bound by residues serine 704 and threonine 705. Serine 725 is subject to Phosphoserine; by PKC. Glutamate 753 serves as a coordination point for L-glutamate. Threonine 761 is modified (phosphothreonine; by PKC). An intrachain disulfide couples cysteine 765 to cysteine 819. Asparagine 766 carries an N-linked (GlcNAc...) asparagine glycan. The chain crosses the membrane as a helical span at residues 835-855; that stretch reads IGGIFIVLAAGLVLSVFVAIG. Over 856–918 the chain is Cytoplasmic; it reads EFIYKSRKNN…IRKQSSVHTV (63 aa).

This sequence belongs to the glutamate-gated ion channel (TC 1.A.10.1) family. GRIK1 subfamily. As to quaternary structure, homotetramer or heterotetramer of pore-forming glutamate receptor subunits. Tetramers may be formed by the dimerization of dimers. Can form functional heteromeric receptors with GRIK4 and GRIK5. Interacts with KLHL17.

It localises to the cell membrane. Its subcellular location is the postsynaptic cell membrane. The enzyme catalyses Ca(2+)(in) = Ca(2+)(out). Ionotropic glutamate receptor that functions as a cation-permeable ligand-gated ion channel, gated by L-glutamate and the glutamatergic agonist kainic acid. L-glutamate acts as an excitatory neurotransmitter at many synapses in the central nervous system. Binding of the excitatory neurotransmitter L-glutamate induces a conformation change, leading to the opening of the cation channel, and thereby converts the chemical signal to an electrical impulse. The receptor then desensitizes rapidly and enters a transient inactive state, characterized by the presence of bound agonist. The protein is Glutamate receptor ionotropic, kainate 1 (GRIK1) of Macaca fascicularis (Crab-eating macaque).